Here is a 594-residue protein sequence, read N- to C-terminus: Actin-histidine N-methyltransferase (594 aa).

Residues 1–22 (MGKKSRVKTQKSGTGATATVSP) form a disordered region. The span at 10–20 (QKSGTGATATV) shows a compositional bias: polar residues. Residues arginine 75, 104 to 106 (EGF), arginine 254, 275 to 279 (DMCNH), and 325 to 327 (SGF) contribute to the S-adenosyl-L-methionine site. In terms of domain architecture, SET spans 94-314 (EGFEMVNFKE…AGDQIYIFYG (221 aa)). The tract at residues 551 to 594 (GLVNGENLIPNGTRSENESLSPEESENVTGEESSGSMAKVKERL) is disordered.

The protein belongs to the class V-like SAM-binding methyltransferase superfamily. SETD3 actin-histidine methyltransferase family. Interacts with MYOD1. Post-translationally, phosphorylated by GSK3B, which is required for recognition by the SCF(FBXW7) complex and subsequent degradation. Ubiquitinated by the SCF(FBXW7) complex following phosphorylation by GSK3B, leading to its degradation by the proteasome. As to expression, prominently expressed in the heart and skeletal muscles and is also detected weakly in the stomach, small intestine, and colon.

The protein resides in the cytoplasm. It is found in the nucleus. The catalysed reaction is L-histidyl-[protein] + S-adenosyl-L-methionine = N(tele)-methyl-L-histidyl-[protein] + S-adenosyl-L-homocysteine + H(+). Protein-histidine N-methyltransferase that specifically mediates 3-methylhistidine (tele-methylhistidine) methylation of actin at 'His-73'. Histidine methylation of actin is required for smooth muscle contraction of the laboring uterus during delivery. Does not have protein-lysine N-methyltransferase activity and probably only catalyzes histidine methylation of actin. The protein is Actin-histidine N-methyltransferase of Mus musculus (Mouse).